Consider the following 221-residue polypeptide: MADNGTITVEELKQLLEQWNLVIGFIFLAWIMLLQFAYSNRNRFLYIIKLVFLWLLWPVTLACFVLAAVYRINWVTGGIAIAMACIVGLMWLSYFVASFRLFARTRSMWSFNPETNILLNVPLRGTILTRPLMESELVIGAVIIRGHLRMAGHSLGRCDIKDLPKEITVATSRTLSYYKLGASQRVGTDSGFAAYNRYRIGNYKLNTDHSGSNDNIALLVQ.

Topologically, residues 1–18 (MADNGTITVEELKQLLEQ) are virion surface. A helical membrane pass occupies residues 19 to 39 (WNLVIGFIFLAWIMLLQFAYS). Residues 40–49 (NRNRFLYIIK) are Intravirion-facing. The chain crosses the membrane as a helical span at residues 50 to 70 (LVFLWLLWPVTLACFVLAAVY). Topologically, residues 71 to 78 (RINWVTGG) are virion surface. The helical transmembrane segment at 79-99 (IAIAMACIVGLMWLSYFVASF) threads the bilayer. Topologically, residues 100 to 221 (RLFARTRSMW…SNDNIALLVQ (122 aa)) are intravirion.

This sequence belongs to the betacoronaviruses M protein family. In terms of assembly, homomultimer. Interacts with envelope E protein in the budding compartment of the host cell, which is located between endoplasmic reticulum and the Golgi complex. Forms a complex with HE and S proteins. Interacts with nucleocapsid N protein. This interaction probably participates in RNA packaging into the virus.

Its subcellular location is the virion membrane. The protein localises to the host Golgi apparatus membrane. In terms of biological role, component of the viral envelope that plays a central role in virus morphogenesis and assembly via its interactions with other viral proteins. This chain is Membrane protein, found in Bat coronavirus HKU3 (BtCoV).